The following is a 103-amino-acid chain: Large ribosomal subunit protein uL24 (103 aa).

This sequence belongs to the universal ribosomal protein uL24 family. In terms of assembly, part of the 50S ribosomal subunit.

Functionally, one of two assembly initiator proteins, it binds directly to the 5'-end of the 23S rRNA, where it nucleates assembly of the 50S subunit. Its function is as follows. One of the proteins that surrounds the polypeptide exit tunnel on the outside of the subunit. This chain is Large ribosomal subunit protein uL24, found in Glaesserella parasuis serovar 5 (strain SH0165) (Haemophilus parasuis).